Consider the following 172-residue polypeptide: Small acidic protein (172 aa).

Residues 1-160 (MSSARESQAR…VPETKKEAKS (160 aa)) form a disordered region. Residues 46–76 (GKKEHTGRLVIGDHRSTSHFRTGEEDKKMNE) show a composition bias toward basic and acidic residues. Polar residues predominate over residues 80-92 (SQYQQSMDSTMSG). Basic and acidic residues-rich tracts occupy residues 112 to 122 (AAGHSSDHESS) and 144 to 160 (ETHDEAAVPETKKEAKS).

This sequence belongs to the SMAP family. In terms of tissue distribution, expressed in brain, heart, eye, liver, kidney and skeletal muscle.

This is Small acidic protein (SMAP) from Gallus gallus (Chicken).